A 529-amino-acid polypeptide reads, in one-letter code: Probable alpha-galactosidase A (529 aa).

The N-terminal stretch at 1 to 19 (MKALFAAITMAHALLQTQA) is a signal peptide. Cys-42 and Cys-74 are joined by a disulfide. N-linked (GlcNAc...) asparagine glycosylation is found at Asn-45, Asn-83, Asn-89, and Asn-119. An intrachain disulfide couples Cys-122 to Cys-152. Residue Asp-150 is the Nucleophile of the active site. Asn-199 is a glycosylation site (N-linked (GlcNAc...) asparagine). Asp-208 serves as the catalytic Proton donor. N-linked (GlcNAc...) asparagine glycosylation is present at Asn-351. In terms of domain architecture, Ricin B-type lectin spans 408–528 (RVDAVSTGIV…GLPSGVRVSG (121 aa)). Cystine bridges form between Cys-425–Cys-438 and Cys-462–Cys-475.

It belongs to the glycosyl hydrolase 27 family.

It is found in the secreted. The enzyme catalyses Hydrolysis of terminal, non-reducing alpha-D-galactose residues in alpha-D-galactosides, including galactose oligosaccharides, galactomannans and galactolipids.. Hydrolyzes a variety of simple alpha-D-galactoside as well as more complex molecules such as oligosaccharides and polysaccharides. The polypeptide is Probable alpha-galactosidase A (aglA) (Aspergillus terreus (strain NIH 2624 / FGSC A1156)).